The sequence spans 177 residues: Putative pre-16S rRNA nuclease (177 aa).

This sequence belongs to the YqgF nuclease family.

The protein localises to the cytoplasm. Functionally, could be a nuclease involved in processing of the 5'-end of pre-16S rRNA. In Psychrobacter arcticus (strain DSM 17307 / VKM B-2377 / 273-4), this protein is Putative pre-16S rRNA nuclease.